We begin with the raw amino-acid sequence, 156 residues long: 6,7-dimethyl-8-ribityllumazine synthase (156 aa).

5-amino-6-(D-ribitylamino)uracil contacts are provided by residues Phe23, 57–59, and 81–83; these read AFE and AVI. 86-87 is a (2S)-2-hydroxy-3-oxobutyl phosphate binding site; sequence AT. His89 functions as the Proton donor in the catalytic mechanism. Phe114 is a 5-amino-6-(D-ribitylamino)uracil binding site. Arg128 serves as a coordination point for (2S)-2-hydroxy-3-oxobutyl phosphate.

Belongs to the DMRL synthase family.

The catalysed reaction is (2S)-2-hydroxy-3-oxobutyl phosphate + 5-amino-6-(D-ribitylamino)uracil = 6,7-dimethyl-8-(1-D-ribityl)lumazine + phosphate + 2 H2O + H(+). The protein operates within cofactor biosynthesis; riboflavin biosynthesis; riboflavin from 2-hydroxy-3-oxobutyl phosphate and 5-amino-6-(D-ribitylamino)uracil: step 1/2. Functionally, catalyzes the formation of 6,7-dimethyl-8-ribityllumazine by condensation of 5-amino-6-(D-ribitylamino)uracil with 3,4-dihydroxy-2-butanone 4-phosphate. This is the penultimate step in the biosynthesis of riboflavin. The protein is 6,7-dimethyl-8-ribityllumazine synthase of Sulfurovum sp. (strain NBC37-1).